A 386-amino-acid chain; its full sequence is ATP phosphoribosyltransferase regulatory subunit (386 aa).

Belongs to the class-II aminoacyl-tRNA synthetase family. HisZ subfamily. As to quaternary structure, heteromultimer composed of HisG and HisZ subunits.

The protein resides in the cytoplasm. It participates in amino-acid biosynthesis; L-histidine biosynthesis; L-histidine from 5-phospho-alpha-D-ribose 1-diphosphate: step 1/9. Required for the first step of histidine biosynthesis. May allow the feedback regulation of ATP phosphoribosyltransferase activity by histidine. This Variovorax paradoxus (strain S110) protein is ATP phosphoribosyltransferase regulatory subunit.